Consider the following 265-residue polypeptide: Eukaryotic translation initiation factor 3 subunit J (265 aa).

A compositionally biased stretch (acidic residues) spans 24 to 34 (AGDEPILDSWD). Residues 24–74 (AGDEPILDSWDEEPKAKKEAAKPKPKPKAGGKKNAKGEEKKEQVLAIDELD) are disordered. The span at 35–45 (EEPKAKKEAAK) shows a compositional bias: basic and acidic residues. Positions 46–57 (PKPKPKAGGKKN) are enriched in basic residues. Coiled coils occupy residues 78 to 106 (RKELMKKAELESDLNNAADLLGDLEMAEE) and 190 to 220 (IENIRQTVATLNILIKDKEKAERQARLARVK).

Belongs to the eIF-3 subunit J family. Component of the eukaryotic translation initiation factor 3 (eIF-3) complex.

It is found in the cytoplasm. Component of the eukaryotic translation initiation factor 3 (eIF-3) complex, which is involved in protein synthesis of a specialized repertoire of mRNAs and, together with other initiation factors, stimulates binding of mRNA and methionyl-tRNAi to the 40S ribosome. The eIF-3 complex specifically targets and initiates translation of a subset of mRNAs involved in cell proliferation. The chain is Eukaryotic translation initiation factor 3 subunit J from Candida glabrata (strain ATCC 2001 / BCRC 20586 / JCM 3761 / NBRC 0622 / NRRL Y-65 / CBS 138) (Yeast).